A 385-amino-acid chain; its full sequence is MRAVHFGAGNIGRGFIGSLLAASGYDVVFVDVNEQIVRLLKERGEYRVIIAGERQEEQWVRGVSALNSQTERDDVIEAIASADLVTTAVGPHILPVIAPVIAAGLERRFTVHQKPLHVIACENMIGGTETLKQHVVTHLSEAGRQLVEECVGFLNCAVDRIVPNQTNDDPLAVTVEPFFEWAIETKNTIGAVPPIQGAHFVADLGPYIERKLFTVNTGHALAAYLGYQKQYRTVQEAMKDSGIRESVEQALRESGAVLVKKHGWDEQEHRSYIETTIGRFTNPSLSDDIVRVARSPIRKLGPNDRLVAPAVQYYTLFERVPSGLVKGIAALLLFDETGDAEATALQQTIEQSGVEGALVQYAGLDNSHPLVVAVKEEYKKMQKEQ.

An NAD(+)-binding site is contributed by 3-14 (AVHFGAGNIGRG).

It belongs to the mannitol dehydrogenase family.

The enzyme catalyses D-mannitol 1-phosphate + NAD(+) = beta-D-fructose 6-phosphate + NADH + H(+). This chain is Mannitol-1-phosphate 5-dehydrogenase, found in Geobacillus thermodenitrificans (strain NG80-2).